The chain runs to 75 residues: Kappa-conotoxin RIIIK (75 aa).

The signal sequence occupies residues 1–19; it reads MSKLGVLLTICLLLFPLTA. Residues 20–50 constitute a propeptide that is removed on maturation; that stretch reads LPMDGDQPVDRLAERMQDNISSEQHTFFEKR. Residues Pro52, Pro63, Pro65, and Pro71 each carry the 4-hydroxyproline modification. 3 disulfide bridges follow: Cys54-Cys67, Cys55-Cys72, and Cys62-Cys73. Thr74 bears the Threonine amide mark.

Belongs to the conotoxin M superfamily. In terms of tissue distribution, expressed by the venom duct.

The protein resides in the secreted. Kappa-conotoxins inhibits voltage-gated potassium channels (Kv). This synthetic toxin reversibly inhibits the insect potassium channel Shaker K+, the teleost homolog TSha1 and the mammalian Kv1.2/KCNA2 channel. Interacts with the pore region of the insect channel, in a state-dependent manner. Causes seizure when intracerebrovascularly injected into mice. Is also toxic when intrathecally injected into mice, but shows no visible effects by intraperitoneal injection. Shows protective effects on cardiac tissue when administered after an ischemic event. This Conus radiatus (Rayed cone) protein is Kappa-conotoxin RIIIK.